The sequence spans 304 residues: L-lactate dehydrogenase (304 aa).

NAD(+) is bound by residues Val-11, Asp-32, Arg-37, and 76-77 (GA). Residues Gln-79, Arg-85, and 117 to 120 (NPVD) contribute to the substrate site. Residue Ser-138 coordinates NAD(+). 143 to 146 (DSAR) lines the substrate pocket. Beta-D-fructose 1,6-bisphosphate is bound by residues Arg-148 and His-163. His-170 (proton acceptor) is an active-site residue. Residue Thr-225 participates in substrate binding.

It belongs to the LDH/MDH superfamily. LDH family. Homotetramer.

Its subcellular location is the cytoplasm. It catalyses the reaction (S)-lactate + NAD(+) = pyruvate + NADH + H(+). It participates in fermentation; pyruvate fermentation to lactate; (S)-lactate from pyruvate: step 1/1. With respect to regulation, allosterically activated by fructose 1,6-bisphosphate (FBP). Catalyzes the conversion of lactate to pyruvate. The sequence is that of L-lactate dehydrogenase from Deinococcus radiodurans (strain ATCC 13939 / DSM 20539 / JCM 16871 / CCUG 27074 / LMG 4051 / NBRC 15346 / NCIMB 9279 / VKM B-1422 / R1).